A 210-amino-acid chain; its full sequence is MNKQRIYSIVAILLFVVGGVLIGKPFYDGYQAEKKQTENVQAVQKMDYEKHETEFVDASKIDQPDLAEVANASLDKKQVIGRISIPSVSLELPVLKSSTEKNLLSGAATVKENQVMGKGNYALAGHNMSKKGVLFSDIASLKKGDKIYLYDNENEYEYAVTGVSEVTPDKWEVVEDHGKDEITLITCVSVKDNSKRYVVAGDLVGTKAKK.

Over 1–5 (MNKQR) the chain is Cytoplasmic. Residues 6–26 (IYSIVAILLFVVGGVLIGKPF) traverse the membrane as a helical segment. Over 27 to 210 (YDGYQAEKKQ…GDLVGTKAKK (184 aa)) the chain is Extracellular. Histidine 126 acts as the Proton donor/acceptor in catalysis. Cysteine 187 acts as the Acyl-thioester intermediate in catalysis.

Belongs to the bacterial sortase family. Class A subfamily.

The protein resides in the cell membrane. Its activity is regulated as follows. Inhibited by thiol-reactive reagents. Its function is as follows. Transpeptidase that anchors surface proteins to the cell wall. Recognizes and modifies its substrate by proteolytic cleavage of a C-terminal sorting signal. Following cleavage, a covalent intermediate is formed via a thioester bond between the sortase and its substrate, which is then transferred and covalently attached to the cell wall. This sortase recognizes a Leu-Pro-x-Thr-Gly (LPXTG) motif, which is cleaved by the sortase between the threonine and glycine residues. Important for growth in macrophages. May be critical in the early stages of inhalation anthrax. The sequence is that of Sortase A from Bacillus anthracis.